The following is a 523-amino-acid chain: Polyamine aminopropyltransferase (523 aa).

A run of 7 helical transmembrane segments spans residues 20–40, 51–71, 88–108, 116–136, 164–184, 186–206, and 215–235; these read VLLA…LALL, IVAT…GALL, AVLG…FAFL, LVLA…VPLL, LGAL…LGMI, GAAV…IFLL, and LVTA…LLVH. A spermidine synthase region spans residues 203–478; the sequence is IFLLRHVVSG…APTPAVPSTA (276 aa). The PABS domain maps to 231-465; the sequence is TLLVHSHDIE…GDWGFALARL (235 aa). Glutamine 261 is an S-methyl-5'-thioadenosine binding site. Aspartate 313 serves as a coordination point for spermidine. Residues glutamate 333 and 365 to 366 contribute to the S-methyl-5'-thioadenosine site; that span reads DA. The active-site Proton acceptor is the aspartate 386.

This sequence belongs to the spermidine/spermine synthase family. Homodimer or homotetramer.

It localises to the cell membrane. It catalyses the reaction S-adenosyl 3-(methylsulfanyl)propylamine + putrescine = S-methyl-5'-thioadenosine + spermidine + H(+). It functions in the pathway amine and polyamine biosynthesis; spermidine biosynthesis; spermidine from putrescine: step 1/1. In terms of biological role, catalyzes the irreversible transfer of a propylamine group from the amino donor S-adenosylmethioninamine (decarboxy-AdoMet) to putrescine (1,4-diaminobutane) to yield spermidine. In Mycobacterium bovis (strain ATCC BAA-935 / AF2122/97), this protein is Polyamine aminopropyltransferase.